The sequence spans 354 residues: Rhodopsin (354 aa).

At 1 to 36 (MNGTEGENFYVPMSNKTGVVRSPFDYPQYYLGEPWM) the chain is on the extracellular side. 2 N-linked (GlcNAc...) asparagine glycosylation sites follow: Asn-2 and Asn-15. A helical membrane pass occupies residues 37–61 (FSALAAYMFFLILTGLPVNFLTLFV). Topologically, residues 62–73 (TIQHKKLRQPLN) are cytoplasmic. A helical membrane pass occupies residues 74 to 96 (YILLNLAVSDLFMVFGGFTTTII). Residues 97 to 110 (TSMNGYFIFGPAGC) are Extracellular-facing. Cys-110 and Cys-187 are oxidised to a cystine. A helical membrane pass occupies residues 111-133 (NFEGFFATLGGEVGLWCLVVLAI). Residues 134–136 (ERY) carry the 'Ionic lock' involved in activated form stabilization motif. At 134–152 (ERYMVVCKPMANFRFGSQH) the chain is on the cytoplasmic side. The chain crosses the membrane as a helical span at residues 153–173 (AIIGVVFTWIMALSCAGPPLV). Residues 174-202 (GWSRYIPEGLQCSCGVDYYTMKPEVNNES) are Extracellular-facing. Residues 203 to 224 (FVIYMFVVHFTIPLIVIFFCYG) form a helical membrane-spanning segment. Residues 225–252 (RLVCTVKEAAAQQQESESTQRAEREVTR) are Cytoplasmic-facing. A helical transmembrane segment spans residues 253-274 (MVIIMVVAFLICWVPYASVAFY). The Extracellular segment spans residues 275–286 (IFINQGCDFTPF). The helical transmembrane segment at 287-308 (FMTVPAFFAKSSAVYNPLIYIL) threads the bilayer. Lys-296 bears the N6-(retinylidene)lysine mark. At 309 to 354 (MNKQFRNCMITTICLGKNPFEEEESTSASASKTEASSVSSSQVAPA) the chain is on the cytoplasmic side. A lipid anchor (S-palmitoyl cysteine) is attached at Cys-322. Residues 333–354 (STSASASKTEASSVSSSQVAPA) are disordered. A compositionally biased stretch (low complexity) spans 334–354 (TSASASKTEASSVSSSQVAPA).

It belongs to the G-protein coupled receptor 1 family. Opsin subfamily. Phosphorylated on some or all of the serine and threonine residues present in the C-terminal region. Post-translationally, contains one covalently linked retinal chromophore.

The protein localises to the membrane. The protein resides in the cell projection. Its subcellular location is the cilium. It is found in the photoreceptor outer segment. In terms of biological role, photoreceptor required for image-forming vision at low light intensity. While most salt water fish species use retinal as chromophore, most freshwater fish use 3-dehydroretinal, or a mixture of retinal and 3-dehydroretinal. Light-induced isomerization of 11-cis to all-trans retinal triggers a conformational change that activates signaling via G-proteins. Subsequent receptor phosphorylation mediates displacement of the bound G-protein alpha subunit by arrestin and terminates signaling. The protein is Rhodopsin (rho) of Leucoraja erinaceus (Little skate).